A 147-amino-acid polypeptide reads, in one-letter code: Hemoglobin subunit beta (147 aa).

Val-2 carries the post-translational modification N-acetylvaline. A Globin domain is found at 3–147 (HLTGEEKGIV…VATALAHKYH (145 aa)). Thr-13 carries the phosphothreonine modification. Ser-45 bears the Phosphoserine mark. Lys-60 is modified (N6-acetyllysine). His-64 is a heme b binding site. Lys-83 carries the post-translational modification N6-acetyllysine. His-93 is a heme b binding site. Cys-94 bears the S-nitrosocysteine mark. An N6-acetyllysine modification is found at Lys-145.

It belongs to the globin family. As to quaternary structure, heterotetramer of two alpha chains and two beta chains. In terms of tissue distribution, red blood cells.

Functionally, involved in oxygen transport from the lung to the various peripheral tissues. The protein is Hemoglobin subunit beta (HBB) of Rhinolophus ferrumequinum (Greater horseshoe bat).